A 555-amino-acid polypeptide reads, in one-letter code: Transmembrane protein 87B (555 aa).

Residues Met-1–Ala-42 form the signal peptide. Residues Val-43–Trp-214 are Lumenal-facing. Residues Asn-68 and Asn-197 are each glycosylated (N-linked (GlcNAc...) asparagine). Residues Pro-215–Leu-235 form a helical membrane-spanning segment. Over Thr-236–Arg-247 the chain is Cytoplasmic. Residues Ile-248–Ser-268 traverse the membrane as a helical segment. The Lumenal segment spans residues Glu-269–Arg-299. Residue Asn-272 is glycosylated (N-linked (GlcNAc...) asparagine). Residues Leu-300 to Met-320 traverse the membrane as a helical segment. Topologically, residues His-321–Arg-322 are cytoplasmic. The chain crosses the membrane as a helical span at residues Val-323–Ile-343. The Lumenal segment spans residues Gly-344–Ala-350. Residues Val-351–Ile-371 traverse the membrane as a helical segment. Over Ser-372–Lys-396 the chain is Cytoplasmic. A helical membrane pass occupies residues Asn-397–Phe-417. Residues Arg-418 to Arg-429 lie on the Lumenal side of the membrane. A helical membrane pass occupies residues Trp-430–Leu-450. Topologically, residues Trp-451–Met-555 are cytoplasmic. Residues Ser-469, Ser-494, Ser-496, and Ser-534 each carry the phosphoserine modification.

Belongs to the LU7TM family. TMEM87 subfamily.

Its subcellular location is the golgi apparatus membrane. Functionally, may be involved in retrograde transport from endosomes to the trans-Golgi network (TGN). This is Transmembrane protein 87B from Homo sapiens (Human).